Here is a 303-residue protein sequence, read N- to C-terminus: MEDLLHSIEQKVKPLIGLGKVADYIPALANVDPNQFGIAIYSNNGELYHAGQAYTDFSIQSISKVFSLTLAIKHYGEDMWKRVGREPSGNPFNSLVQLEYEAGVPRNPFINAGALVISDMNQSRFASPHYAMREFIRRLADNPHLNSDQIVANSEYEFRARNASMAYLMKAFGNFENDVEDVLHSYFDNCAMRMNCVDLAKSFSFLANKGYSQLSGEQILSARETTQVNGLLATSGLYDEAGNFAYRVGLPGKSGVGGGIIAIVPNRFSVCVWSPELNKSGNSLAGMAALEALSESIGWSVFG.

7 residues coordinate substrate: Ser-61, Asn-111, Glu-155, Asn-162, Tyr-186, Tyr-238, and Val-256.

It belongs to the glutaminase family. Homotetramer.

The catalysed reaction is L-glutamine + H2O = L-glutamate + NH4(+). In Marinomonas sp. (strain MWYL1), this protein is Glutaminase.